A 352-amino-acid polypeptide reads, in one-letter code: Ion-translocating oxidoreductase complex subunit D (352 aa).

The next 4 helical transmembrane spans lie at 20–40 (IMLL…WFFG), 42–62 (GTLV…ALVL), 89–109 (IPPL…VIIA), and 123–143 (PAMI…TSWL). Position 187 is an FMN phosphoryl threonine (Thr187). The next 5 helical transmembrane spans lie at 214 to 234 (ILAG…GVWL), 242 to 262 (WHVP…GWLF), 267 to 287 (LAAP…FFIL), 301 to 321 (LIFG…GGYP), and 322 to 342 (DGVA…DYYT).

The protein belongs to the NqrB/RnfD family. In terms of assembly, the complex is composed of six subunits: RsxA, RsxB, RsxC, RsxD, RsxE and RsxG. FMN serves as cofactor.

The protein resides in the cell inner membrane. Part of a membrane-bound complex that couples electron transfer with translocation of ions across the membrane. Required to maintain the reduced state of SoxR. The sequence is that of Ion-translocating oxidoreductase complex subunit D from Escherichia coli (strain UTI89 / UPEC).